The primary structure comprises 340 residues: Replication factor C subunit 5 (340 aa).

M1 carries the N-acetylmethionine modification. 60–67 (GPPGTGKT) serves as a coordination point for ATP.

The protein belongs to the activator 1 small subunits family. In terms of assembly, subunit of the RFC complex, an heteropentameric complex consisting of a large subunit RFC1 and four small subunits RFC2, RFC3, RFC4 and RFC5; the RFC complex interacts with PCNA. Forms an heterotetrameric complex with RFC2, RFC3 and RFC4; this complex has ATPase activity but is not stimulated by PCNA. The heterotetramer of subunits RFC2, RFC3, RFC4 and RFC5 interacts with RAD17.

The protein localises to the nucleus. Its function is as follows. Subunit of the replication factor C (RFC) complex which acts during elongation of primed DNA templates by DNA polymerases delta and epsilon, and is necessary for ATP-dependent loading of proliferating cell nuclear antigen (PCNA) onto primed DNA. This chain is Replication factor C subunit 5 (RFC5), found in Homo sapiens (Human).